Here is a 183-residue protein sequence, read N- to C-terminus: Peptidyl-tRNA hydrolase (183 aa).

Tyrosine 14 contributes to the tRNA binding site. The Proton acceptor role is filled by histidine 19. 2 residues coordinate tRNA: tyrosine 60 and asparagine 62.

Belongs to the PTH family. In terms of assembly, monomer.

The protein localises to the cytoplasm. The catalysed reaction is an N-acyl-L-alpha-aminoacyl-tRNA + H2O = an N-acyl-L-amino acid + a tRNA + H(+). Hydrolyzes ribosome-free peptidyl-tRNAs (with 1 or more amino acids incorporated), which drop off the ribosome during protein synthesis, or as a result of ribosome stalling. Its function is as follows. Catalyzes the release of premature peptidyl moieties from peptidyl-tRNA molecules trapped in stalled 50S ribosomal subunits, and thus maintains levels of free tRNAs and 50S ribosomes. The protein is Peptidyl-tRNA hydrolase of Mycoplasmoides gallisepticum (strain R(low / passage 15 / clone 2)) (Mycoplasma gallisepticum).